Consider the following 81-residue polypeptide: Beta-catenin-interacting protein 1 (81 aa).

The residue at position 59 (Ser59) is a Phosphoserine.

The protein belongs to the CTNNBIP1 family. Binds CTNNB1. Highly expressed in heart, brain, liver and skeletal muscle. Detected at low levels in kidney, testis and lung.

It localises to the cytoplasm. The protein localises to the nucleus. Prevents the interaction between CTNNB1 and TCF family members, and acts as a negative regulator of the Wnt signaling pathway. The protein is Beta-catenin-interacting protein 1 (Ctnnbip1) of Mus musculus (Mouse).